Here is a 289-residue protein sequence, read N- to C-terminus: NAD kinase (289 aa).

The Proton acceptor role is filled by D63. Residues 63–64 (DG), R68, 138–139 (ND), R149, D168, 179–184 (TGYSLS), and Q238 contribute to the NAD(+) site.

It belongs to the NAD kinase family. Requires a divalent metal cation as cofactor.

It localises to the cytoplasm. It carries out the reaction NAD(+) + ATP = ADP + NADP(+) + H(+). Functionally, involved in the regulation of the intracellular balance of NAD and NADP, and is a key enzyme in the biosynthesis of NADP. Catalyzes specifically the phosphorylation on 2'-hydroxyl of the adenosine moiety of NAD to yield NADP. The protein is NAD kinase of Gemmatimonas aurantiaca (strain DSM 14586 / JCM 11422 / NBRC 100505 / T-27).